The chain runs to 168 residues: Putative postmeiotic segregation increased 2-like protein 3 (168 aa).

A KRAB domain is found at 8–84; the sequence is VSFKDVAVDF…EGEFPCQHSP (77 aa).

The protein belongs to the DNA mismatch repair MutL/HexB family.

This chain is Putative postmeiotic segregation increased 2-like protein 3 (PMS2P3), found in Homo sapiens (Human).